Consider the following 380-residue polypeptide: Tryptophan--tRNA ligase 2 (380 aa).

The short motif at 74–82 is the 'HIGH' region element; sequence PSGPMHLGH. The short motif at 249–253 is the 'KMSKS' region element; the sequence is KMSSS.

It belongs to the class-I aminoacyl-tRNA synthetase family.

The protein localises to the cytoplasm. The catalysed reaction is tRNA(Trp) + L-tryptophan + ATP = L-tryptophyl-tRNA(Trp) + AMP + diphosphate + H(+). This is Tryptophan--tRNA ligase 2 from Halobacterium salinarum (strain ATCC 700922 / JCM 11081 / NRC-1) (Halobacterium halobium).